A 556-amino-acid polypeptide reads, in one-letter code: Formate--tetrahydrofolate ligase (556 aa).

T65–S72 contributes to the ATP binding site.

The protein belongs to the formate--tetrahydrofolate ligase family.

It catalyses the reaction (6S)-5,6,7,8-tetrahydrofolate + formate + ATP = (6R)-10-formyltetrahydrofolate + ADP + phosphate. It functions in the pathway one-carbon metabolism; tetrahydrofolate interconversion. The polypeptide is Formate--tetrahydrofolate ligase (Streptococcus pneumoniae (strain ATCC 700669 / Spain 23F-1)).